Here is a 176-residue protein sequence, read N- to C-terminus: RNA pyrophosphohydrolase (176 aa).

Positions 6 to 149 (GYRPNVGIVI…KRDVYRRVMK (144 aa)) constitute a Nudix hydrolase domain. A Nudix box motif is present at residues 38–59 (GGINPGESAEQAMYRELFEEVG).

The protein belongs to the Nudix hydrolase family. RppH subfamily. The cofactor is a divalent metal cation.

Accelerates the degradation of transcripts by removing pyrophosphate from the 5'-end of triphosphorylated RNA, leading to a more labile monophosphorylated state that can stimulate subsequent ribonuclease cleavage. In Escherichia fergusonii (strain ATCC 35469 / DSM 13698 / CCUG 18766 / IAM 14443 / JCM 21226 / LMG 7866 / NBRC 102419 / NCTC 12128 / CDC 0568-73), this protein is RNA pyrophosphohydrolase.